Consider the following 287-residue polypeptide: Small ribosomal subunit protein uS2 (287 aa).

Residues leucine 254–alanine 277 show a composition bias toward low complexity. The disordered stretch occupies residues leucine 254 to serine 287.

This sequence belongs to the universal ribosomal protein uS2 family.

This chain is Small ribosomal subunit protein uS2 (rpsB), found in Mycobacterium tuberculosis (strain CDC 1551 / Oshkosh).